Consider the following 379-residue polypeptide: Cytochrome b (379 aa).

4 helical membrane-spanning segments follow: residues 33–53, 77–98, 113–133, and 178–198; these read FGSL…FLAM, WLIR…SIHA, WNIG…GYVL, and FFAF…VHLL. Heme b-binding residues include His-83 and His-97. 2 residues coordinate heme b: His-182 and His-196. Position 201 (His-201) interacts with a ubiquinone. The next 4 helical transmembrane spans lie at 226–246, 288–308, 320–340, and 347–367; these read IKDL…ALFF, LGGV…PLLN, ITQT…WIGG, and FTMI…ILMP.

Belongs to the cytochrome b family. In terms of assembly, the cytochrome bc1 complex contains 11 subunits: 3 respiratory subunits (MT-CYB, CYC1 and UQCRFS1), 2 core proteins (UQCRC1 and UQCRC2) and 6 low-molecular weight proteins (UQCRH/QCR6, UQCRB/QCR7, UQCRQ/QCR8, UQCR10/QCR9, UQCR11/QCR10 and a cleavage product of UQCRFS1). This cytochrome bc1 complex then forms a dimer. Heme b is required as a cofactor.

It localises to the mitochondrion inner membrane. In terms of biological role, component of the ubiquinol-cytochrome c reductase complex (complex III or cytochrome b-c1 complex) that is part of the mitochondrial respiratory chain. The b-c1 complex mediates electron transfer from ubiquinol to cytochrome c. Contributes to the generation of a proton gradient across the mitochondrial membrane that is then used for ATP synthesis. This Thaptomys nigrita (Blackish grass mouse) protein is Cytochrome b (MT-CYB).